A 305-amino-acid chain; its full sequence is Tetraacyldisaccharide 4'-kinase (305 aa).

An ATP-binding site is contributed by 39–46; sequence SVGGNGKT.

Belongs to the LpxK family.

It carries out the reaction a lipid A disaccharide + ATP = a lipid IVA + ADP + H(+). Its pathway is glycolipid biosynthesis; lipid IV(A) biosynthesis; lipid IV(A) from (3R)-3-hydroxytetradecanoyl-[acyl-carrier-protein] and UDP-N-acetyl-alpha-D-glucosamine: step 6/6. Its function is as follows. Transfers the gamma-phosphate of ATP to the 4'-position of a tetraacyldisaccharide 1-phosphate intermediate (termed DS-1-P) to form tetraacyldisaccharide 1,4'-bis-phosphate (lipid IVA). The polypeptide is Tetraacyldisaccharide 4'-kinase (Pseudoalteromonas atlantica (strain T6c / ATCC BAA-1087)).